The sequence spans 117 residues: Elafin (117 aa).

Residues 1–22 (MRASSFLIVVVFLIAGTLVLEA) form the signal peptide. The propeptide occupies 23 to 60 (AVTGVPVKGQDTVKGRVPFNGQDPVKGQVSVKGQDKVK). SVP-1 clotting repeat units follow at residues 29–54 (VKGQ…VSVK) and 55–72 (GQDK…VSTK). Residues 29–72 (VKGQDTVKGRVPFNGQDPVKGQVSVKGQDKVKAQEPVKGPVSTK) are 2 X tandem repeats of SVP-1 like motif. In terms of domain architecture, WAP spans 69 to 117 (VSTKPGSCPIILIRCAMLNPPNRCLKDTDCPGIKKCCEGSCGMACFVPQ). Cystine bridges form between C76–C105, C83–C109, C92–C104, and C98–C113.

The protein localises to the secreted. Its function is as follows. Neutrophil and pancreatic elastase-specific inhibitor of skin. It may prevent elastase-mediated tissue proteolysis. Has been shown to inhibit the alpha-4-beta-2/CHRNA2-CHRNB2 nicotinic acetylcholine receptor and to produce a weak inhibition on Kv11.1/KCNH2/ERG1 and on the transient receptor potential cation channel subfamily V member 1 (TRPV1). The chain is Elafin (PI3) from Homo sapiens (Human).